The sequence spans 300 residues: Transcription termination/antitermination protein NusG (300 aa).

The segment at 1–99 (MSDPNVNDAI…EAEEPELDPI (99 aa)) is disordered. Acidic residues-rich tracts occupy residues 14–41 (ESVE…EAAD) and 47–97 (ETDE…PELD).

The protein belongs to the NusG family.

Participates in transcription elongation, termination and antitermination. The chain is Transcription termination/antitermination protein NusG from Streptomyces coelicolor (strain ATCC BAA-471 / A3(2) / M145).